We begin with the raw amino-acid sequence, 381 residues long: E3 ubiquitin-protein ligase At1g63170 (381 aa).

Residues 1 to 23 (MSRETTTEATPLILTDGGGGRRS) form a disordered region. 2 helical membrane-spanning segments follow: residues 74-94 (VVVL…AVLV) and 107-127 (VWII…CVEY). The interval 135–161 (RRDLSPRSSSSSSSSSSSMDEEEGLGL) is disordered. Residues 140 to 152 (PRSSSSSSSSSSS) show a composition bias toward low complexity. Residues 170–194 (LELGQLENENNSFAKHLESANTMIS) adopt a coiled-coil conformation. 3 helical membrane-spanning segments follow: residues 189 to 209 (ANTM…SSGG), 224 to 244 (IVFL…ACVI), and 245 to 265 (GIAV…VAEQ). The RING-type; atypical zinc finger occupies 325-366 (CCICLSAYEDETELRELPCGHHFHCGCVDKWLYINATCPLCK).

The protein localises to the membrane. It catalyses the reaction S-ubiquitinyl-[E2 ubiquitin-conjugating enzyme]-L-cysteine + [acceptor protein]-L-lysine = [E2 ubiquitin-conjugating enzyme]-L-cysteine + N(6)-ubiquitinyl-[acceptor protein]-L-lysine.. It participates in protein modification; protein ubiquitination. In terms of biological role, mediates E2-dependent protein ubiquitination. This chain is E3 ubiquitin-protein ligase At1g63170, found in Arabidopsis thaliana (Mouse-ear cress).